A 147-amino-acid chain; its full sequence is Large ribosomal subunit protein uL13 (147 aa).

The protein belongs to the universal ribosomal protein uL13 family. Part of the 50S ribosomal subunit.

This protein is one of the early assembly proteins of the 50S ribosomal subunit, although it is not seen to bind rRNA by itself. It is important during the early stages of 50S assembly. In Kocuria rhizophila (strain ATCC 9341 / DSM 348 / NBRC 103217 / DC2201), this protein is Large ribosomal subunit protein uL13.